We begin with the raw amino-acid sequence, 954 residues long: Glucosidase 2 subunit alpha (954 aa).

The signal sequence occupies residues Met-1–Thr-22. Asn-114, Asn-126, Asn-142, Asn-173, and Asn-345 each carry an N-linked (GlcNAc...) asparagine glycan. The Nucleophile role is filled by Asp-537. Residue Glu-540 is part of the active site. The active-site Proton donor is the Asp-614. 6 N-linked (GlcNAc...) asparagine glycosylation sites follow: Asn-783, Asn-791, Asn-867, Asn-880, Asn-907, and Asn-941.

This sequence belongs to the glycosyl hydrolase 31 family. In terms of assembly, heterodimer of a catalytic subunit alpha (ROT2) and a subunit beta (GTB1).

The protein resides in the endoplasmic reticulum. The enzyme catalyses N(4)-(alpha-D-Glc-(1-&gt;3)-alpha-D-Man-(1-&gt;2)-alpha-D-Man-(1-&gt;2)-alpha-D-Man-(1-&gt;3)-[alpha-D-Man-(1-&gt;2)-alpha-D-Man-(1-&gt;3)-[alpha-D-Man-(1-&gt;2)-alpha-D-Man-(1-&gt;6)]-alpha-D-Man-(1-&gt;6)]-beta-D-Man-(1-&gt;4)-beta-D-GlcNAc-(1-&gt;4)-beta-D-GlcNAc)-L-asparaginyl-[protein] + H2O = N(4)-(alpha-D-Man-(1-&gt;2)-alpha-D-Man-(1-&gt;2)-alpha-D-Man-(1-&gt;3)-[alpha-D-Man-(1-&gt;2)-alpha-D-Man-(1-&gt;3)-[alpha-D-Man-(1-&gt;2)-alpha-D-Man-(1-&gt;6)]-alpha-D-Man-(1-&gt;6)]-beta-D-Man-(1-&gt;4)-beta-D-GlcNAc-(1-&gt;4)-beta-D-GlcNAc)-L-asparaginyl-[protein] (N-glucan mannose isomer 9A1,2,3B1,2,3) + beta-D-glucose. It catalyses the reaction N(4)-(alpha-D-Glc-(1-&gt;3)-alpha-D-Glc-(1-&gt;3)-alpha-D-Man-(1-&gt;2)-alpha-D-Man-(1-&gt;2)-alpha-D-Man-(1-&gt;3)-[alpha-D-Man-(1-&gt;2)-alpha-D-Man-(1-&gt;3)-[alpha-D-Man-(1-&gt;2)-alpha-D-Man-(1-&gt;6)]-alpha-D-Man-(1-&gt;6)]-beta-D-Man-(1-&gt;4)-beta-D-GlcNAc-(1-&gt;4)-beta-D-GlcNAc)-L-asparaginyl-[protein] + H2O = N(4)-(alpha-D-Glc-(1-&gt;3)-alpha-D-Man-(1-&gt;2)-alpha-D-Man-(1-&gt;2)-alpha-D-Man-(1-&gt;3)-[alpha-D-Man-(1-&gt;2)-alpha-D-Man-(1-&gt;3)-[alpha-D-Man-(1-&gt;2)-alpha-D-Man-(1-&gt;6)]-alpha-D-Man-(1-&gt;6)]-beta-D-Man-(1-&gt;4)-beta-D-GlcNAc-(1-&gt;4)-beta-D-GlcNAc)-L-asparaginyl-[protein] + beta-D-glucose. The protein operates within glycan metabolism; N-glycan metabolism. Inhibited by glucose, maltose and nigerose, and by the antibiotic deoxynojirimycin. In terms of biological role, catalytic subunit of glucosidase 2, which cleaves sequentially the 2 innermost alpha-1,3-linked glucose residues from the Glc(2)Man(9)GlcNAc(2) oligosaccharide precursor of immature glycoproteins. This chain is Glucosidase 2 subunit alpha (ROT2), found in Saccharomyces cerevisiae (strain ATCC 204508 / S288c) (Baker's yeast).